We begin with the raw amino-acid sequence, 600 residues long: Albumin (600 aa).

Positions 1-10 (LLFLFSSAYS) are cleaved as a signal peptide. Residues 11-16 (RGVFRR) constitute a propeptide that is removed on maturation. 3 consecutive Albumin domains span residues 11 to 202 (RGVF…DELR), 203 to 395 (DEGK…EFQP), and 396 to 593 (LVEE…KFVA). Cu cation is bound at residue His19. Ser21 carries the phosphoserine modification. Ca(2+)-binding residues include Glu22 and Asp29. A disulfide bridge connects residues Cys69 and Cys78. 2 positions are modified to phosphoserine: Ser74 and Ser81. His83 provides a ligand contact to Zn(2+). Intrachain disulfides connect Cys91–Cys107, Cys106–Cys117, Cys140–Cys185, Cys184–Cys193, Cys216–Cys262, and Cys261–Cys269. Thr99 carries the phosphothreonine modification. Lys221 is modified (N6-succinyllysine). Lys256 lines the (4Z,15Z)-bilirubin IXalpha pocket. Glu260 contacts Ca(2+). Residues His263 and Asp265 each contribute to the Zn(2+) site. Asp265, Glu268, Asp271, and Asp275 together coordinate Ca(2+). Disulfide bonds link Cys281/Cys295, Cys294/Cys305, Cys332/Cys377, Cys376/Cys385, Cys408/Cys454, Cys453/Cys464, Cys477/Cys493, and Cys492/Cys503. A Phosphoserine modification is found at Ser289. The residue at position 435 (Ser435) is a Phosphoserine. A phosphothreonine mark is found at Thr436 and Thr438. An N6-succinyllysine modification is found at Lys452. Ser505 is subject to Phosphoserine. 2 cysteine pairs are disulfide-bonded: Cys530–Cys575 and Cys574–Cys583. N6-succinyllysine is present on Lys535. Position 550 is an N6-methyllysine (Lys550). At Lys580 the chain carries N6-succinyllysine.

The protein belongs to the ALB/AFP/VDB family. In terms of assembly, interacts with FCGRT; this interaction regulates ALB homeostasis. Interacts with TASOR. In plasma, occurs in a covalently-linked complex with chromophore-bound alpha-1-microglobulin; this interaction does not prevent fatty acid binding to ALB. Post-translationally, phosphorylated by FAM20C in the extracellular medium. In terms of tissue distribution, plasma.

It localises to the secreted. Functionally, binds water, Ca(2+), Na(+), K(+), fatty acids, hormones, bilirubin and drugs. Its main function is the regulation of the colloidal osmotic pressure of blood. Major zinc transporter in plasma, typically binds about 80% of all plasma zinc. Major calcium and magnesium transporter in plasma, binds approximately 45% of circulating calcium and magnesium in plasma. Potentially has more than two calcium-binding sites and might additionally bind calcium in a non-specific manner. The shared binding site between zinc and calcium at residue Asp-265 suggests a crosstalk between zinc and calcium transport in the blood. The rank order of affinity is zinc &gt; calcium &gt; magnesium. Binds to the bacterial siderophore enterobactin and inhibits enterobactin-mediated iron uptake of E.coli from ferric transferrin, and may thereby limit the utilization of iron and growth of enteric bacteria such as E.coli. Does not prevent iron uptake by the bacterial siderophore aerobactin. The protein is Albumin (ALB) of Macaca mulatta (Rhesus macaque).